We begin with the raw amino-acid sequence, 261 residues long: Phosphate import ATP-binding protein PstB (261 aa).

The 242-residue stretch at 15 to 256 folds into the ABC transporter domain; that stretch reads LQVRRLNFYY…PAHQETENYI (242 aa). 47 to 54 provides a ligand contact to ATP; it reads GPSGCGKS.

This sequence belongs to the ABC transporter superfamily. Phosphate importer (TC 3.A.1.7) family. In terms of assembly, the complex is composed of two ATP-binding proteins (PstB), two transmembrane proteins (PstC and PstA) and a solute-binding protein (PstS).

The protein localises to the cell inner membrane. The enzyme catalyses phosphate(out) + ATP + H2O = ADP + 2 phosphate(in) + H(+). Part of the ABC transporter complex PstSACB involved in phosphate import. Responsible for energy coupling to the transport system. The chain is Phosphate import ATP-binding protein PstB from Burkholderia sp.